A 105-amino-acid polypeptide reads, in one-letter code: Circadian clock oscillator protein KaiB1 (105 aa).

Belongs to the KaiB family. As to quaternary structure, homotetramer in solution and crystals formed by 2 dimers. Only elutes as a homotetramer in size exclusion chromatography, interacts with KaiC1 and KaiC3. The KaiABC complex composition changes during the circadian cycle to control KaiC phosphorylation. Complexes KaiC(6), KaiA(2-4):KaiC(6), KaiB(6):KaiC(6) and KaiC(6):KaiB(6):KaiA(12) are among the most important forms, many form cooperatively. Undergoes a major conformational rearrangment; in the free state forms homotetramers as a dimer of dimers. When bound to the CI domain of KaiC switches to a monomeric thioredoxin-fold (KaiB(fs)). KaiB(fs) binds CikA, leading it to dephosphorylate phospho-RpaA.

Functionally, key component of the KaiABC oscillator complex, which constitutes the main circadian regulator in cyanobacteria. Complex composition changes during the circadian cycle to control KaiC phosphorylation. KaiA stimulates KaiC autophosphorylation, while KaiB sequesters KaiA, leading to KaiC autodephosphorylation. Phospho-Ser-431 KaiC accumulation triggers binding of KaiB to form the KaiB(6):KaiC(6) complex, leading to changes in output regulators CikA and SasA. KaiB switches to a thioredoxin-like fold (KaiB(fs)) when bound to KaiC. KaiB(6):KaiC(6) formation exposes a site for KaiA binding that sequesters KaiA from KaiC, making the KaiC(6):KaiB(6):KaiA(12) complex that results in KaiC autodephosphorylation. In terms of biological role, component of the oscillator and circadian clock in this organism, enhances fitness in a rhythmic environment. The homotetramer reduces the ATPase activity of KaiC3 by 35%. A metamorphic protein which reversibly switches between an inactive tetrameric fold and a rare, thioredoxin-like monomeric fold (KaiB(fs)). KaiB(fs) binds phospho-KaiC, KaiA and CikA. KaiA and CikA compete for binding to KaiB(fs), and KaiB(fs) and SasA compete for binding to KaiC, thus the clock oscillator and output signal pathway are tightly coupled. This is Circadian clock oscillator protein KaiB1 from Synechocystis sp. (strain ATCC 27184 / PCC 6803 / Kazusa).